We begin with the raw amino-acid sequence, 1755 residues long: Transposon Ty1-GR2 Gag-Pol polyprotein (1755 aa).

A compositionally biased stretch (low complexity) spans M1–S16. Disordered stretches follow at residues M1–Q93, P126–P173, and G352–T421. 2 stretches are compositionally biased toward polar residues: residues T48 to S60 and Q127 to F152. The segment covering T153–T165 has biased composition (low complexity). An RNA-binding region spans residues N299 to H401. Residues N402–S418 are compositionally biased toward low complexity. S416 is modified (phosphoserine). Residue D461 is the For protease activity; shared with dimeric partner of the active site. The interval N583–C640 is integrase-type zinc finger-like. The Integrase catalytic domain maps to N660 to P835. Mg(2+) contacts are provided by D671 and D736. Disordered regions lie at residues S956–K1087, R1092–P1111, and D1130–T1187. The span at S960–T969 shows a compositional bias: low complexity. Over residues S1005 to T1015 the composition is skewed to polar residues. Residues E1038 to S1053 are compositionally biased toward basic and acidic residues. 2 stretches are compositionally biased toward polar residues: residues Y1054–D1082 and P1101–P1111. The Bipartite nuclear localization signal signature appears at K1178–R1212. Positions N1338–Q1476 constitute a Reverse transcriptase Ty1/copia-type domain. Residues D1346, D1427, D1428, D1610, E1652, and D1685 each contribute to the Mg(2+) site. The RNase H Ty1/copia-type domain occupies D1610 to K1752.

In terms of assembly, the capsid protein forms a homotrimer, from which the VLPs are assembled. The protease is a homodimer, whose active site consists of two apposed aspartic acid residues. Initially, virus-like particles (VLPs) are composed of the structural unprocessed proteins Gag and Gag-Pol, and also contain the host initiator methionine tRNA (tRNA(i)-Met) which serves as a primer for minus-strand DNA synthesis, and a dimer of genomic Ty RNA. Processing of the polyproteins occurs within the particle and proceeds by an ordered pathway, called maturation. First, the protease (PR) is released by autocatalytic cleavage of the Gag-Pol polyprotein yielding capsid protein p45 and a Pol-p154 precursor protein. This cleavage is a prerequisite for subsequent processing of Pol-p154 at the remaining sites to release the mature structural and catalytic proteins. Maturation takes place prior to the RT reaction and is required to produce transposition-competent VLPs.

It localises to the cytoplasm. It is found in the nucleus. The enzyme catalyses DNA(n) + a 2'-deoxyribonucleoside 5'-triphosphate = DNA(n+1) + diphosphate. It carries out the reaction Endonucleolytic cleavage to 5'-phosphomonoester.. Functionally, capsid protein (CA) is the structural component of the virus-like particle (VLP), forming the shell that encapsulates the retrotransposons dimeric RNA genome. The particles are assembled from trimer-clustered units and there are holes in the capsid shells that allow for the diffusion of macromolecules. CA also has nucleocapsid-like chaperone activity, promoting primer tRNA(i)-Met annealing to the multipartite primer-binding site (PBS), dimerization of Ty1 RNA and initiation of reverse transcription. Its function is as follows. The aspartyl protease (PR) mediates the proteolytic cleavages of the Gag and Gag-Pol polyproteins after assembly of the VLP. In terms of biological role, reverse transcriptase/ribonuclease H (RT) is a multifunctional enzyme that catalyzes the conversion of the retro-elements RNA genome into dsDNA within the VLP. The enzyme displays a DNA polymerase activity that can copy either DNA or RNA templates, and a ribonuclease H (RNase H) activity that cleaves the RNA strand of RNA-DNA heteroduplexes during plus-strand synthesis and hydrolyzes RNA primers. The conversion leads to a linear dsDNA copy of the retrotransposon that includes long terminal repeats (LTRs) at both ends. Integrase (IN) targets the VLP to the nucleus, where a subparticle preintegration complex (PIC) containing at least integrase and the newly synthesized dsDNA copy of the retrotransposon must transit the nuclear membrane. Once in the nucleus, integrase performs the integration of the dsDNA into the host genome. This chain is Transposon Ty1-GR2 Gag-Pol polyprotein (TY1B-GR2), found in Saccharomyces cerevisiae (strain ATCC 204508 / S288c) (Baker's yeast).